Here is a 533-residue protein sequence, read N- to C-terminus: Zona pellucida sperm-binding protein 3 receptor (533 aa).

An N-terminal signal peptide occupies residues methionine 1 to glycine 28. Sushi domains are found at residues aspartate 29–lysine 88, lysine 89–isoleucine 150, valine 151–lysine 215, valine 216–proline 275, asparagine 276–arginine 342, valine 343–serine 408, and alanine 409–tryptophan 467. Intrachain disulfides connect cysteine 30/cysteine 74, cysteine 60/cysteine 86, cysteine 91/cysteine 132, cysteine 118/cysteine 148, cysteine 153/cysteine 196, cysteine 182/cysteine 213, cysteine 218/cysteine 260, cysteine 246/cysteine 273, cysteine 278/cysteine 328, cysteine 312/cysteine 340, cysteine 345/cysteine 393, cysteine 378/cysteine 406, cysteine 411/cysteine 452, and cysteine 438/cysteine 465. 2 N-linked (GlcNAc...) asparagine glycosylation sites follow: asparagine 68 and asparagine 77. Asparagine 185, asparagine 191, and asparagine 200 each carry an N-linked (GlcNAc...) asparagine glycan. N-linked (GlcNAc...) asparagine glycosylation is found at asparagine 433 and asparagine 455.

Homooligomer; disulfide-linked. May contain 6-8 monomers per oligomer. In terms of processing, the N-terminus may be blocked. As to expression, testis. Not expressed in heart, brain, liver or kidney.

It is found in the cytoplasmic vesicle. Its subcellular location is the secretory vesicle. It localises to the acrosome lumen. Its function is as follows. Probably involved in the formation of the dense core and M1 domain of the acrosome. May also regulate the release of certain secretory proteins following the acrosomal reaction. The protein is Zona pellucida sperm-binding protein 3 receptor (ZP3R) of Cavia porcellus (Guinea pig).